The following is a 265-amino-acid chain: Thymidine kinase 2, mitochondrial (265 aa).

A mitochondrion-targeting transit peptide spans 1-33 (MLLRPLRGWAALALRCFEPGSPGSPASGPGSRR). Positions 21–31 (SPGSPASGPGS) are enriched in low complexity. The segment at 21–45 (SPGSPASGPGSRRVQRGAWPSDKER) is disordered. Residue 57–65 (GNIASGKTT) participates in ATP binding. The active-site Proton acceptor is Glu133.

The protein belongs to the DCK/DGK family. Homodimer.

It localises to the mitochondrion. It catalyses the reaction thymidine + ATP = dTMP + ADP + H(+). The enzyme catalyses 2'-deoxycytidine + ATP = dCMP + ADP + H(+). It carries out the reaction 2'-deoxyuridine + ATP = dUMP + ADP + H(+). Functionally, phosphorylates thymidine, deoxycytidine, and deoxyuridine in the mitochondrial matrix. In non-replicating cells, where cytosolic dNTP synthesis is down-regulated, mtDNA synthesis depends solely on TK2 and DGUOK. The protein is Thymidine kinase 2, mitochondrial (TK2) of Macaca fascicularis (Crab-eating macaque).